The chain runs to 614 residues: Type VII secretion system protein EssD (614 aa).

The interval Q417–S445 is disordered. Residues G423–H435 are compositionally biased toward basic and acidic residues.

This sequence belongs to the EssD family. Interacts (via C-terminal) with EssG; this interaction blocks EssD activity. Interacts with EssE.

It is found in the secreted. Its subcellular location is the cell membrane. In terms of biological role, component of the type VII secretion system (Ess). Plays a role in Ess secretion during infection. Required for the efficient secretion of EsxA. Required for abscess formation and staphylococcal persistence in host tissues. Possesses a toxic DNase activity that is modulated by EsaG by forming a nuclease toxin-antitoxin pair. This nuclease toxin targets competitor bacteria. The polypeptide is Type VII secretion system protein EssD (Staphylococcus aureus (strain USA300)).